The primary structure comprises 110 residues: Large ribosomal subunit protein uL22 (110 aa).

The protein belongs to the universal ribosomal protein uL22 family. Part of the 50S ribosomal subunit.

Its function is as follows. This protein binds specifically to 23S rRNA; its binding is stimulated by other ribosomal proteins, e.g. L4, L17, and L20. It is important during the early stages of 50S assembly. It makes multiple contacts with different domains of the 23S rRNA in the assembled 50S subunit and ribosome. The globular domain of the protein is located near the polypeptide exit tunnel on the outside of the subunit, while an extended beta-hairpin is found that lines the wall of the exit tunnel in the center of the 70S ribosome. This Methylococcus capsulatus (strain ATCC 33009 / NCIMB 11132 / Bath) protein is Large ribosomal subunit protein uL22.